The primary structure comprises 109 residues: Synaptobrevin-1 (109 aa).

Residues 1-26 (MDAQGDAGAQGGSQGGPRPSNKRLQQ) are disordered. The Cytoplasmic portion of the chain corresponds to 1–86 (MDAQGDAGAQ…KRKYWWKNIK (86 aa)). One can recognise a v-SNARE coiled-coil homology domain in the interval 23–83 (RLQQTQAQVD…ATLKRKYWWK (61 aa)). The chain crosses the membrane as a helical; Anchor for type IV membrane protein span at residues 87–107 (MMIIMCAIVVILIIIIVLWAG). The Extracellular segment spans residues 108 to 109 (GK).

The protein belongs to the synaptobrevin family. In terms of assembly, part of the SNARE core complex containing ric-4/SNAP25, snb-1/VAMP2 and unc-64/STX1A. This complex binds to cpx-1/CPLX1. In terms of tissue distribution, expressed in the nervous system notably the nerve ring, ventral cord and dorsal cord.

It is found in the cytoplasmic vesicle. Its subcellular location is the secretory vesicle. The protein resides in the synaptic vesicle membrane. It localises to the cell membrane. The protein localises to the synapse. It is found in the synaptosome. Its function is as follows. Involved in the targeting and/or fusion of transport vesicles to their target membrane. Acts in neuronal exocytosis of synaptic transmission. Likely to have a role in cholinergic transmisson. Required for viability, coordinated movement and M3 pharynx motor neuron function. The sequence is that of Synaptobrevin-1 from Caenorhabditis elegans.